We begin with the raw amino-acid sequence, 806 residues long: 85/88 kDa calcium-independent phospholipase A2 (806 aa).

ANK repeat units follow at residues 120–147, 151–181, 185–215, 219–248, 251–281, 286–312, 316–345, 349–378, and 382–403; these read WSVA…ANCA, EGCT…QMDV, KGET…GLNQ, QGLT…RCNI, PNGY…QIHS, YGAS…NVNS, AGNT…NADA, HGNT…EVDT, and FGET…KAIL. The next 2 membrane-spanning stretches (helical) occupy residues 480-500 and 511-531; these read LLCL…LIAI and LFDW…ILHS. The PNPLA domain occupies 481–665; it reads LCLDGGGVKG…LANNPTLDAM (185 aa). The short motif at 485–490 is the GXGXXG element; the sequence is GGGVKG. The GXSXG signature appears at 517–521; the sequence is GTSTG. Catalysis depends on S519, which acts as the Nucleophile. The Proton acceptor role is filled by D652. Residues 652–654 carry the DGA/G motif; that stretch reads DGG. A calmodulin-binding (1-9-14 motif) region spans residues 677-686; the sequence is RKGQANKVKK. The calmodulin-binding (IQ motif) stretch occupies residues 748 to 759; it reads AWCEMVGIQYFR.

Homodimer formed by catalytic domains tightly interacting through a large hydrophobic interface. The contact area involves 3 alpha helices, several loops and a part of the beta sheet from each monomer. Both active sites of the dimer are in close proximity adopting an open conformation that provide sufficient space for phospholipid access and favoring cooperativity in deacylation-reacylation reactions. Each monomer has 9 ankyrin repeats stacked side-by-side in an elongated structure oriented outwards from the catalytic core. As to expression, four different transcripts were found to be expressed in a distinct tissue distribution.

It is found in the cytoplasm. It localises to the cell membrane. Its subcellular location is the mitochondrion. The protein localises to the cell projection. The protein resides in the pseudopodium. The enzyme catalyses a 1,2-diacyl-sn-glycero-3-phosphocholine + H2O = a 1-acyl-sn-glycero-3-phosphocholine + a fatty acid + H(+). The catalysed reaction is a 1-O-alkyl-2-acyl-sn-glycero-3-phosphocholine + H2O = a 1-O-alkyl-sn-glycero-3-phosphocholine + a fatty acid + H(+). It catalyses the reaction 1,2-dihexadecanoyl-sn-glycero-3-phosphocholine + H2O = 1-hexadecanoyl-sn-glycero-3-phosphocholine + hexadecanoate + H(+). It carries out the reaction 1-hexadecanoyl-2-(9Z-octadecenoyl)-sn-glycero-3-phosphocholine + H2O = 1-hexadecanoyl-sn-glycero-3-phosphocholine + (9Z)-octadecenoate + H(+). The enzyme catalyses 1-hexadecanoyl-2-(9Z,12Z-octadecadienoyl)-sn-glycero-3-phosphocholine + H2O = (9Z,12Z)-octadecadienoate + 1-hexadecanoyl-sn-glycero-3-phosphocholine + H(+). The catalysed reaction is 1-hexadecanoyl-2-(5Z,8Z,11Z,14Z-eicosatetraenoyl)-sn-glycero-3-phosphocholine + H2O = 1-hexadecanoyl-sn-glycero-3-phosphocholine + (5Z,8Z,11Z,14Z)-eicosatetraenoate + H(+). It catalyses the reaction 1-octadecanoyl-2-(5Z,8Z,11Z,14Z-eicosatetraenoyl)-sn-glycero-3-phosphocholine + H2O = 1-octadecanoyl-sn-glycero-3-phosphocholine + (5Z,8Z,11Z,14Z)-eicosatetraenoate + H(+). It carries out the reaction 1-hexadecanoyl-2-(5Z,8Z,11Z,14Z-eicosatetraenoyl)-sn-glycero-3-phosphoethanolamine + H2O = 1-hexadecanoyl-sn-glycero-3-phosphoethanolamine + (5Z,8Z,11Z,14Z)-eicosatetraenoate + H(+). The enzyme catalyses 1,2-dihexadecanoyl-sn-glycero-3-phosphate + H2O = 1-hexadecanoyl-sn-glycero-3-phosphate + hexadecanoate + H(+). The catalysed reaction is a 1-acyl-sn-glycero-3-phosphocholine + H2O = sn-glycerol 3-phosphocholine + a fatty acid + H(+). It catalyses the reaction 1-hexadecanoyl-sn-glycero-3-phosphocholine + H2O = sn-glycerol 3-phosphocholine + hexadecanoate + H(+). It carries out the reaction 1-(5Z,8Z,11Z,14Z-eicosatetraenoyl)-sn-glycero-3-phosphocholine + H2O = sn-glycerol 3-phosphocholine + (5Z,8Z,11Z,14Z)-eicosatetraenoate + H(+). The enzyme catalyses 2-(5Z,8Z,11Z,14Z)-eicosatetraenoyl-sn-glycero-3-phosphocholine + H2O = sn-glycerol 3-phosphocholine + (5Z,8Z,11Z,14Z)-eicosatetraenoate + H(+). The catalysed reaction is 1-O-hexadecyl-2-(5Z,8Z,11Z,14Z)-eicosatetraenoyl-sn-glycero-3-phosphocholine + H2O = 1-O-hexadecyl-sn-glycero-3-phosphocholine + (5Z,8Z,11Z,14Z)-eicosatetraenoate + H(+). It catalyses the reaction 1-O-hexadecyl-2-acetyl-sn-glycero-3-phosphocholine + H2O = 1-O-hexadecyl-sn-glycero-3-phosphocholine + acetate + H(+). It carries out the reaction hexadecanoyl-CoA + H2O = hexadecanoate + CoA + H(+). The enzyme catalyses 1',3'-bis[1,2-di-(9Z-octadecenoyl)-sn-glycero-3-phospho]-glycerol + H2O = 1'-[1,2-di-(9Z-octadecenoyl)-sn-glycero-3-phospho]-3'-[1-(9Z-octadecenoyl)-sn-glycero-3-phospho]-glycerol + (9Z)-octadecenoate + H(+). The catalysed reaction is 1'-[1,2-di-(9Z-octadecenoyl)-sn-glycero-3-phospho]-3'-[1-(9Z-octadecenoyl)-sn-glycero-3-phospho]-glycerol + H2O = 1',3'-bis-[1-(9Z-octadecenoyl)-sn-glycero-3-phospho]-glycerol + (9Z)-octadecenoate + H(+). It catalyses the reaction 1',3'-bis-[1,2-di-(9Z,12Z-octadecadienoyl)-sn-glycero-3-phospho]-glycerol + H2O = 1'-[1,2-di-(9Z,12Z-octadecadienoyl)-sn-glycero-3-phospho]-3'-[1-(9Z,12Z-octadecadienoyl)-sn-glycero-3-phospho]-glycerol + (9Z,12Z)-octadecadienoate + H(+). It carries out the reaction 1-octadecanoyl-2-(15-hydroxy-(5Z,8Z,11Z,13E)-eicosatetraenoyl)-sn-glycero-3-phosphoethanolamine + H2O = 1-octadecanoyl-sn-glycero-3-phosphoethanolamine + 15-hydroxy-(5Z,8Z,11Z,13E)-eicosatetraenoate + H(+). Activated by ATP. Inhibited by calcium-activated calmodulin. Inhibited by bromoenol lactone (BEL). Calcium-independent phospholipase involved in phospholipid remodeling with implications in cellular membrane homeostasis, mitochondrial integrity and signal transduction. Hydrolyzes the ester bond of the fatty acyl group attached at sn-1 or sn-2 position of phospholipids (phospholipase A1 and A2 activity respectively), producing lysophospholipids that are used in deacylation-reacylation cycles. Hydrolyzes both saturated and unsaturated long fatty acyl chains in various glycerophospholipid classes such as phosphatidylcholines, phosphatidylethanolamines and phosphatidates, with a preference for hydrolysis at sn-2 position. Can further hydrolyze lysophospholipids carrying saturated fatty acyl chains (lysophospholipase activity). Upon oxidative stress, contributes to remodeling of mitochondrial phospholipids in pancreatic beta cells, in a repair mechanism to reduce oxidized lipid content. Preferentially hydrolyzes oxidized polyunsaturated fatty acyl chains from cardiolipins, yielding monolysocardiolipins that can be reacylated with unoxidized fatty acyls to regenerate native cardiolipin species. Hydrolyzes oxidized glycerophosphoethanolamines present in pancreatic islets, releasing oxidized polyunsaturated fatty acids such as hydroxyeicosatetraenoates (HETEs). Has thioesterase activity toward fatty-acyl CoA releasing CoA-SH known to facilitate fatty acid transport and beta-oxidation in mitochondria particularly in skeletal muscle. Plays a role in regulation of membrane dynamics and homeostasis. Selectively hydrolyzes sn-2 arachidonoyl group in plasmalogen phospholipids, structural components of lipid rafts and myelin. Regulates F-actin polymerization at the pseudopods, which is required for both speed and directionality of MCP1/CCL2-induced monocyte chemotaxis. Targets membrane phospholipids to produce potent lipid signaling messengers. Generates lysophosphatidate (LPA, 1-acyl-glycerol-3-phosphate), which acts via G-protein receptors in various cell types. Has phospholipase A2 activity toward platelet-activating factor (PAF, 1-O-alkyl-2-acetyl-sn-glycero-3-phosphocholine), likely playing a role in inactivation of this potent pro-inflammatory signaling lipid. In response to glucose, amplifies calcium influx in pancreatic beta cells to promote INS secretion. In terms of biological role, lacks the catalytic domain and may act as a negative regulator of the catalytically active isoforms. This is 85/88 kDa calcium-independent phospholipase A2 (PLA2G6) from Homo sapiens (Human).